The sequence spans 198 residues: ATP-dependent Clp protease proteolytic subunit 2 (198 aa).

The Nucleophile role is filled by Ser94. His119 is an active-site residue.

The protein belongs to the peptidase S14 family. As to quaternary structure, fourteen ClpP subunits assemble into 2 heptameric rings which stack back to back to give a disk-like structure with a central cavity, resembling the structure of eukaryotic proteasomes.

The protein localises to the cytoplasm. The enzyme catalyses Hydrolysis of proteins to small peptides in the presence of ATP and magnesium. alpha-casein is the usual test substrate. In the absence of ATP, only oligopeptides shorter than five residues are hydrolyzed (such as succinyl-Leu-Tyr-|-NHMec, and Leu-Tyr-Leu-|-Tyr-Trp, in which cleavage of the -Tyr-|-Leu- and -Tyr-|-Trp bonds also occurs).. Cleaves peptides in various proteins in a process that requires ATP hydrolysis. Has a chymotrypsin-like activity. Plays a major role in the degradation of misfolded proteins. This is ATP-dependent Clp protease proteolytic subunit 2 from Borreliella burgdorferi (strain ATCC 35210 / DSM 4680 / CIP 102532 / B31) (Borrelia burgdorferi).